Reading from the N-terminus, the 137-residue chain is MLQPKRTKFRKMHKGRNTGLAHRGSTVAFGQIGLKSLTRGRMTARQIEAARRTITRKIKRGGKIWIRVFPDKPITNKPLEVRMGKGKGPVEYWVCEIKPGKILYELEGISEELAREALTLAAAKLPFKTTIVKRTIM.

It belongs to the universal ribosomal protein uL16 family. In terms of assembly, part of the 50S ribosomal subunit.

Its function is as follows. Binds 23S rRNA and is also seen to make contacts with the A and possibly P site tRNAs. The chain is Large ribosomal subunit protein uL16 from Psychrobacter cryohalolentis (strain ATCC BAA-1226 / DSM 17306 / VKM B-2378 / K5).